The sequence spans 358 residues: MSLDRFLKNAISPWMKKDGSDADIVLSSRIRLARNMSAFTFPMLSSKEEAYAVAKHVKDALGGTQGEALGKAEMLAMEDMRTNDKRMLVEKHLISPHLAEQSKYGMVLLSGDESLSIMINEEDHIRIQSLSAGFELENCLQAANAVDDWVESHLTYAYDSQYGYLTSCPTNVGTGMRASVMIHLPALAMTRQLQRILPAINQLGLVVRGIYGEGSEALGNLFQISNQITLGKTEQDIVDDLQGVVKQLIRQERVARDSLLQHSKLELKDRVFRSYGILANSYIIDSKEATRRLSDVRLGIDLGFIENTAGKILDELMILTQPGFLQQYAKTVLTPEQRDERRAALIRERLKLEHETAD.

A Phosphagen kinase C-terminal domain is found at 24–255 (IVLSSRIRLA…KQLIRQERVA (232 aa)). ATP is bound by residues 27-31 (SSRIR), His92, Arg126, 177-181 (RASVM), and 208-213 (RGIYGE). An RDXXRA motif of the pArg binding pocket involved in allosteric regulation motif is present at residues 338-343 (RDERRA).

The protein belongs to the ATP:guanido phosphotransferase family.

It catalyses the reaction L-arginyl-[protein] + ATP = N(omega)-phospho-L-arginyl-[protein] + ADP + H(+). Appears to be allosterically activated by the binding of pArg-containing polypeptides to the pArg-binding pocket localized in the C-terminal domain of McsB. Its function is as follows. Catalyzes the specific phosphorylation of arginine residues in a large number of proteins. Is part of the bacterial stress response system. Protein arginine phosphorylation has a physiologically important role and is involved in the regulation of many critical cellular processes, such as protein homeostasis, motility, competence, and stringent and stress responses, by regulating gene expression and protein activity. The polypeptide is Protein-arginine kinase (Shouchella clausii (strain KSM-K16) (Alkalihalobacillus clausii)).